Consider the following 504-residue polypeptide: Probable cytosol aminopeptidase (504 aa).

The Mn(2+) site is built by K274 and D279. K286 is a catalytic residue. Positions 297, 356, and 358 each coordinate Mn(2+). Residue R360 is part of the active site.

Belongs to the peptidase M17 family. Requires Mn(2+) as cofactor.

The protein resides in the cytoplasm. It catalyses the reaction Release of an N-terminal amino acid, Xaa-|-Yaa-, in which Xaa is preferably Leu, but may be other amino acids including Pro although not Arg or Lys, and Yaa may be Pro. Amino acid amides and methyl esters are also readily hydrolyzed, but rates on arylamides are exceedingly low.. The enzyme catalyses Release of an N-terminal amino acid, preferentially leucine, but not glutamic or aspartic acids.. Its function is as follows. Presumably involved in the processing and regular turnover of intracellular proteins. Catalyzes the removal of unsubstituted N-terminal amino acids from various peptides. The protein is Probable cytosol aminopeptidase of Blochmanniella floridana.